The chain runs to 275 residues: Myoblast determination protein 1 homolog (275 aa).

The bHLH domain maps to 84–135 (DRRKAATMRERRRLSKVNDAFETLKRCTSTNPNQRLPKVEILRNAISYIESL). Positions 234-275 (EGHEESPCSPHEGSVLSDTGTTAPSPTSCPQQQAQETIYQVL) are disordered. Polar residues predominate over residues 249–275 (LSDTGTTAPSPTSCPQQQAQETIYQVL).

Efficient DNA binding requires dimerization with another bHLH protein. As to expression, from mid-gastrula to just before somite formation, expressed in cells adjacent to axial mesoderm. Subsequently, during the anterior-to-posterior wave of somite formation and maturation, expressed within particular regions of each somite. Expressed in both muscle and non-muscle cells.

The protein resides in the nucleus. In terms of biological role, may act as a transcriptional activator that promotes transcription of muscle-specific target genes and plays a role in muscle differentiation. The chain is Myoblast determination protein 1 homolog (myod1) from Danio rerio (Zebrafish).